We begin with the raw amino-acid sequence, 171 residues long: Macro domain-containing protein RSc0334 (171 aa).

The Macro domain maps to 1–171 (MPIPTVTLRA…LYETALNEAR (171 aa)).

The protein belongs to the MacroD-type family.

This chain is Macro domain-containing protein RSc0334, found in Ralstonia nicotianae (strain ATCC BAA-1114 / GMI1000) (Ralstonia solanacearum).